We begin with the raw amino-acid sequence, 211 residues long: MRTLVVDHPLVAHKLTVLRDKNTPSPVFRQLTEELVTLLAYEATRDVRTEPVTIETPVSTTIGTAFTKPTPLVVPILRAGLGMLEGMTKLVPTAEVGFLGMARDEETLDIITYAERLPENLTDRQIFVLDPMLATGGTLREAIKFLFKRGASDVTCICLLAAPEGLAKLEEELSDANVTIVLASIDEKLNEKSYIVPGLGDAGDRLYGIAG.

Residues Arg-78, Arg-103, and 130–138 (DPMLATGGT) contribute to the 5-phospho-alpha-D-ribose 1-diphosphate site. Residues Ile-195 and 200-202 (GDA) each bind uracil. Asp-201 lines the 5-phospho-alpha-D-ribose 1-diphosphate pocket.

This sequence belongs to the UPRTase family. Mg(2+) serves as cofactor.

The enzyme catalyses UMP + diphosphate = 5-phospho-alpha-D-ribose 1-diphosphate + uracil. It participates in pyrimidine metabolism; UMP biosynthesis via salvage pathway; UMP from uracil: step 1/1. Allosterically activated by GTP. In terms of biological role, catalyzes the conversion of uracil and 5-phospho-alpha-D-ribose 1-diphosphate (PRPP) to UMP and diphosphate. This chain is Uracil phosphoribosyltransferase, found in Arthrobacter sp. (strain FB24).